Reading from the N-terminus, the 605-residue chain is uncharacterized protein (605 aa).

The interval 22–93 (FTEPARFYPS…KQGTAVHGAE (72 aa)) is disordered. The span at 46–57 (SENASSSVPSHS) shows a compositional bias: low complexity.

This is an uncharacterized protein from Treponema pallidum (strain Nichols).